Consider the following 540-residue polypeptide: Probable feruloyl esterase B-1 (540 aa).

The first 18 residues, 1-18 (MLVMQLLLPFLASTAAAA), serve as a signal peptide directing secretion. N-linked (GlcNAc...) asparagine glycosylation is found at Asn-28, Asn-49, Asn-66, Asn-95, Asn-113, and Asn-195. 2 disulfide bridges follow: Cys-41–Cys-90 and Cys-76–Cys-129. 3 disulfides stabilise this stretch: Cys-202/Cys-458, Cys-271/Cys-288, and Cys-297/Cys-308. Catalysis depends on Ser-203, which acts as the Acyl-ester intermediate. Asn-234 carries an N-linked (GlcNAc...) asparagine glycan. Ca(2+) contacts are provided by Asp-272, Asp-275, Ala-277, Asp-279, and Ile-281. 3 N-linked (GlcNAc...) asparagine glycosylation sites follow: Asn-298, Asn-328, and Asn-367. Residues Asp-417 and His-457 each act as charge relay system in the active site. An N-linked (GlcNAc...) asparagine glycan is attached at Asn-506. A disulfide bridge connects residues Cys-517 and Cys-539.

This sequence belongs to the tannase family. As to quaternary structure, homodimer.

It localises to the secreted. It carries out the reaction feruloyl-polysaccharide + H2O = ferulate + polysaccharide.. Functionally, involved in degradation of plant cell walls. Hydrolyzes the feruloyl-arabinose ester bond in arabinoxylans as well as the feruloyl-galactose and feruloyl-arabinose ester bonds in pectin. In Aspergillus oryzae (strain ATCC 42149 / RIB 40) (Yellow koji mold), this protein is Probable feruloyl esterase B-1 (faeB-1).